Reading from the N-terminus, the 422-residue chain is Tryptophan synthase beta chain 2 (422 aa).

K111 carries the N6-(pyridoxal phosphate)lysine modification.

The protein belongs to the TrpB family. In terms of assembly, tetramer of two alpha and two beta chains. Pyridoxal 5'-phosphate is required as a cofactor.

It catalyses the reaction (1S,2R)-1-C-(indol-3-yl)glycerol 3-phosphate + L-serine = D-glyceraldehyde 3-phosphate + L-tryptophan + H2O. It functions in the pathway amino-acid biosynthesis; L-tryptophan biosynthesis; L-tryptophan from chorismate: step 5/5. Functionally, the beta subunit is responsible for the synthesis of L-tryptophan from indole and L-serine. The protein is Tryptophan synthase beta chain 2 (trpB2) of Thermotoga maritima (strain ATCC 43589 / DSM 3109 / JCM 10099 / NBRC 100826 / MSB8).